Consider the following 310-residue polypeptide: NAD-dependent protein deacylase sirtuin-5, mitochondrial (310 aa).

The N-terminal 36 residues, 1-36, are a transit peptide targeting the mitochondrion; it reads MQPLQIAPCRLLYGLYRGLKSPASTGTRICPAMARP. In terms of domain architecture, Deacetylase sirtuin-type spans 37 to 307; sequence SSNMADFRKL…PEALAPHETG (271 aa). 58–77 is an NAD(+) binding site; that stretch reads GAGVSAESGVPTFRGAGGYW. Positions 102 and 105 each coordinate substrate. 140-143 contributes to the NAD(+) binding site; it reads QNID. His-158 serves as the catalytic Proton acceptor. Residues Cys-166, Cys-169, Cys-207, and Cys-212 each contribute to the Zn(2+) site. NAD(+) contacts are provided by residues 249 to 251, 275 to 277, and Cys-293; these read GTS and NME.

The protein belongs to the sirtuin family. Class III subfamily. Monomer. Homodimer. Interacts with CPS1. Interacts with PCCA. Zn(2+) serves as cofactor.

The protein resides in the mitochondrion. The protein localises to the cytoplasm. It localises to the cytosol. It is found in the nucleus. It carries out the reaction N(6)-malonyl-L-lysyl-[protein] + NAD(+) + H2O = 2''-O-malonyl-ADP-D-ribose + nicotinamide + L-lysyl-[protein]. The enzyme catalyses N(6)-succinyl-L-lysyl-[protein] + NAD(+) + H2O = 2''-O-succinyl-ADP-D-ribose + nicotinamide + L-lysyl-[protein]. It catalyses the reaction N(6)-glutaryl-L-lysyl-[protein] + NAD(+) + H2O = 2''-O-glutaryl-ADP-D-ribose + nicotinamide + L-lysyl-[protein]. NAD-dependent lysine demalonylase, desuccinylase and deglutarylase that specifically removes malonyl, succinyl and glutaryl groups on target proteins. Activates CPS1 and contributes to the regulation of blood ammonia levels during prolonged fasting: acts by mediating desuccinylation and deglutarylation of CPS1, thereby increasing CPS1 activity in response to elevated NAD levels during fasting. Activates SOD1 by mediating its desuccinylation, leading to reduced reactive oxygen species. Activates SHMT2 by mediating its desuccinylation. Modulates ketogenesis through the desuccinylation and activation of HMGCS2. Has weak NAD-dependent protein deacetylase activity; however this activity may not be physiologically relevant in vivo. Can deacetylate cytochrome c (CYCS) and a number of other proteins in vitro such as UOX. In Canis lupus familiaris (Dog), this protein is NAD-dependent protein deacylase sirtuin-5, mitochondrial.